The sequence spans 506 residues: ESX-5 secretion system ATPase EccB5 (506 aa).

The helical transmembrane segment at 56-76 threads the bilayer; the sequence is VVASVSAALVICLGALLWSFI.

The protein belongs to the EccB family. In terms of assembly, part of the ESX-5 / type VII secretion system (T7SS), which is composed of cytosolic and membrane components. The ESX-5 membrane complex is composed of EccB5, EccC5, EccD5 and EccE5.

The protein resides in the cell inner membrane. An ATPase. Part of the ESX-5 specialized secretion system, which is responsible for the secretion of EsxN and a number of PE_PGRS and PPE proteins, including PPE41. The protein is ESX-5 secretion system ATPase EccB5 of Mycobacterium tuberculosis (strain CDC 1551 / Oshkosh).